Consider the following 220-residue polypeptide: Putative respiratory nitrate reductase subunit Rieske (220 aa).

The region spanning 118 to 206 is the Rieske domain; the sequence is KAPTLLVRHA…ITVSSEGYLI (89 aa). Residues C151, H153, C168, and H171 each contribute to the [2Fe-2S] cluster site. A disulfide bridge connects residues C156 and C170.

In terms of assembly, probable multiprotein complex; a catalytic heterodimer of an alpha and beta chain is proposed to associate with additional subunits involved in membrane attachment and electron transfer. The cofactor is [2Fe-2S] cluster.

It is found in the cell membrane. The respiratory membrane-bound nitrate reductase enzyme complex plays a role in generation of metabolic energy by using nitrate as a terminal electron acceptor during anaerobic conditions. Proposed Rieske subunit involved in a protonmotive Q-cycle mechanism-based electron transfer electrons to the beta subunit. This Haloferax mediterranei (strain ATCC 33500 / DSM 1411 / JCM 8866 / NBRC 14739 / NCIMB 2177 / R-4) (Halobacterium mediterranei) protein is Putative respiratory nitrate reductase subunit Rieske (narB).